The following is a 981-amino-acid chain: uncharacterized protein (981 aa).

Residues 535 to 612 (VLLNPVAIEI…SIASIIQKKS (78 aa)) form the Carrier domain. S571 is modified (O-(pantetheine 4'-phosphoryl)serine).

The protein belongs to the ATP-dependent AMP-binding enzyme family.

This is an uncharacterized protein from Schizosaccharomyces pombe (strain 972 / ATCC 24843) (Fission yeast).